The primary structure comprises 811 residues: Receptor-like protein 46 (811 aa).

Positions 1 to 21 (MSKQCLLSCFLFFCFFIPQLS) are cleaved as a signal peptide. Residues 22-782 (FSCPQDQRQS…EEEDKEEEET (761 aa)) are Extracellular-facing. Residues N46, N71, N128, and N143 are each glycosylated (N-linked (GlcNAc...) asparagine). LRR repeat units follow at residues 104 to 128 (INSLVGLDVSFNNIQGEIPGYAFVN), 129 to 153 (LTSLISLDMCCNRFNGSIPHELFSL), 155 to 177 (NLQRLDLSRNVIGGTLSGDIKEL), 178 to 201 (KNLQELILDENLIGGAIPSEIGSL), 203 to 225 (ELLTLTLRQNMFNSSIPSSVSRL), 226 to 249 (TKLKTIDLQNNFLSSKIPDDIGNL), 251 to 273 (NLSTLSLSMNKLSGGIPSSIHNL), 275 to 298 (NLETLQLENNNGLSGEIPAAWLFG), 299 to 322 (LQKLKVLRLEGNNKLQWNNNGYVF), 324 to 348 (QFKLTHLSLRSCGLEGNIPDWLKNQ), 349 to 369 (TALVYLDLSINRLEGRFPKWL), 370 to 395 (ADLKIRNITLSDNRLTGSLPPNLFQR), 397 to 419 (SLYYLVLSRNNFSGQIPDTIGES), 421 to 442 (VMVLMLSENNFSGSVPKSITKI), 443 to 466 (PFLKLLDLSKNRLSGEFPRFRPES), 468 to 488 (LEWLDISSNEFSGDVPAYFGG), 490 to 510 (TSMLLMSQNNFSGEFPQNFRN), 511 to 534 (LSYLIRLDLHDNKISGTVASLISQ), 536 to 560 (SSSVEVLSLRNNSLKGSIPEGISNL), 561 to 583 (TSLKVLDLSENNLDGYLPSSLGN), 643 to 665 (LYTLLDLSKNKLHGEIPTSLGNL), 666 to 688 (KSLKVLNLSNNEFSGLIPQSFGD), 690 to 713 (EKVESLDLSHNNLTGEIPKTLSKL), and 714 to 738 (SELNTLDLRNNKLKGRIPESPQLDR). N215 is a glycosylation site (N-linked (GlcNAc...) asparagine). The N-linked (GlcNAc...) asparagine glycan is linked to N251. N347 carries an N-linked (GlcNAc...) asparagine glycan. N376, N407, and N430 each carry an N-linked (GlcNAc...) asparagine glycan. Residues N499 and N510 are each glycosylated (N-linked (GlcNAc...) asparagine). N-linked (GlcNAc...) asparagine glycosylation is found at N546, N559, and N583. N-linked (GlcNAc...) asparagine glycans are attached at residues N672 and N701. N-linked (GlcNAc...) asparagine glycosylation is present at N747. A helical transmembrane segment spans residues 783 to 803 (IFSWNAAAIGCSCGFLIAVVF). At 804–811 (MSYNELWK) the chain is on the cytoplasmic side.

Belongs to the RLP family.

The protein resides in the cell membrane. This is Receptor-like protein 46 from Arabidopsis thaliana (Mouse-ear cress).